Here is a 1495-residue protein sequence, read N- to C-terminus: Terminal uridylyltransferase 7 (1495 aa).

4 disordered regions span residues 1 to 30, 43 to 69, 89 to 140, and 162 to 205; these read MGDT…GHPQ, HGSK…RKGP, WMND…EDGY, and LETT…PVID. A compositionally biased stretch (basic and acidic residues) spans 15-26; the sequence is DRGTMDDDDFRR. A phosphothreonine mark is found at Thr-57 and Thr-64. 2 stretches are compositionally biased toward basic and acidic residues: residues 92–118 and 128–140; these read DSHK…EFKP and QRKD…EDGY. A phosphoserine mark is found at Ser-132 and Ser-172. Residues 178–187 are compositionally biased toward basic residues; the sequence is QRSRPRKPRK. The Matrin-type zinc finger occupies 244 to 274; sequence YTCRLCDVLIESIAFAHKHIKEKRHKKNIKE. The PAP-associated 1 domain occupies 551–600; that stretch reads VGQLWVELLRFYALEFNLADLVISIRVKELVSRELKDWPKKRIAIEDPYS. Phosphoserine is present on Ser-600. Positions 734 to 756 are enriched in basic and acidic residues; it reads DDYKGDKVYHPETGRKNEKEKVG. Disordered stretches follow at residues 734–757 and 831–898; these read DDYK…KVGR and THSV…EDDE. Residues 831 to 841 are compositionally biased toward polar residues; the sequence is THSVQGQTSEM. Acidic residues-rich tracts occupy residues 843 to 859, 868 to 880, and 887 to 898; these read PSDE…EEEE, EDED…DELD, and GDEDALSEEDDE. Ser-844 carries the phosphoserine modification. A phosphoserine mark is found at Ser-893 and Ser-939. A sufficient for monouridylation activity region spans residues 951–1495; that stretch reads SKLIFTKGKS…ASAKRTQQES (545 aa). Residues 963–980 form a CCHC-type 1 zinc finger; the sequence is VVCSLCKREGHLKKDCPE. Residues 1047 to 1050, 1057 to 1060, Asn-1130, Lys-1152, 1170 to 1174, and His-1286 each bind UTP; these read SSKN, SDLD, and SYAYT. Residues Asp-1058 and Asp-1060 each coordinate Mg(2+). Residues 1233–1286 form the PAP-associated 2 domain; it reads SVGQLWLGLLRFYTEEFDFKEHVISIRRKSLLTTFKKQWTSKYIVIEDPFDLNH. The CCHC-type 2 zinc finger occupies 1345-1362; sequence RCCRICGKIGHFMKDCPM. Disordered regions lie at residues 1367–1424 and 1466–1495; these read RRRR…MRAA and CPQF…QQES. Basic and acidic residues predominate over residues 1381-1410; that stretch reads PENKEKRSKEDKEIHNKYTEREVSTKEDKP. A CCHC-type 3 zinc finger spans residues 1451-1468; the sequence is KRCFICGREGHIKKECPQ. The span at 1470–1485 shows a compositional bias: polar residues; the sequence is KGSSGSLSSKYMTQGK.

The protein belongs to the DNA polymerase type-B-like family. Interacts with MOV10; the interaction is RNA-dependent. The cofactor is Mg(2+). Mn(2+) is required as a cofactor.

Its subcellular location is the cytoplasm. The catalysed reaction is RNA(n) + UTP = RNA(n)-3'-uridine ribonucleotide + diphosphate. Functionally, uridylyltransferase that mediates the terminal uridylation of mRNAs with short (less than 25 nucleotides) poly(A) tails, hence facilitating global mRNA decay. Essential for both oocyte maturation and fertility. Through 3' terminal uridylation of mRNA, sculpts, with TUT7, the maternal transcriptome by eliminating transcripts during oocyte growth. Involved in microRNA (miRNA)-induced gene silencing through uridylation of deadenylated miRNA targets. Also functions as an integral regulator of microRNA biogenesiS using 3 different uridylation mechanisms. Acts as a suppressor of miRNA biogenesis by mediating the terminal uridylation of some miRNA precursors, including that of let-7 (pre-let-7). Uridylated pre-let-7 RNA is not processed by Dicer and undergo degradation. Pre-let-7 uridylation is strongly enhanced in the presence of LIN28A. In the absence of LIN28A, TUT7 and TUT4 monouridylate group II pre-miRNAs, which includes most of pre-let7 members, that shapes an optimal 3' end overhang for efficient processing. Add oligo-U tails to truncated pre-miRNAS with a 5' overhang which may promote rapid degradation of non-functional pre-miRNA species. Does not play a role in replication-dependent histone mRNA degradation. Due to functional redundancy between TUT4 and TUT7, the identification of the specific role of each of these proteins is difficult. TUT4 and TUT7 restrict retrotransposition of long interspersed element-1 (LINE-1) in cooperation with MOV10 counteracting the RNA chaperonne activity of L1RE1. TUT7 uridylates LINE-1 mRNAs in the cytoplasm which inhibits initiation of reverse transcription once in the nucleus, whereas uridylation by TUT4 destabilizes mRNAs in cytoplasmic ribonucleoprotein granules. This is Terminal uridylyltransferase 7 from Homo sapiens (Human).